A 332-amino-acid chain; its full sequence is 5-dehydro-2-deoxygluconokinase 1 (332 aa).

It belongs to the carbohydrate kinase PfkB family.

The catalysed reaction is 5-dehydro-2-deoxy-D-gluconate + ATP = 6-phospho-5-dehydro-2-deoxy-D-gluconate + ADP + H(+). Its pathway is polyol metabolism; myo-inositol degradation into acetyl-CoA; acetyl-CoA from myo-inositol: step 5/7. In terms of biological role, catalyzes the phosphorylation of 5-dehydro-2-deoxy-D-gluconate (2-deoxy-5-keto-D-gluconate or DKG) to 6-phospho-5-dehydro-2-deoxy-D-gluconate (DKGP). This Bacillus cereus (strain ZK / E33L) protein is 5-dehydro-2-deoxygluconokinase 1.